The following is a 155-amino-acid chain: Pathogenesis-related protein STH-21 (155 aa).

It belongs to the BetVI family.

This Solanum tuberosum (Potato) protein is Pathogenesis-related protein STH-21 (STH-21).